Consider the following 937-residue polypeptide: MSEMVDLKEFLAELGKTQKELKNVIEQAKDIGLELKTNSKMTPEEANKLYKYIVEGIKEQIQANQPAKNPEQDNKDDLNTAVASKPLNKKVSKTPKKEEKSQPKPKKTKEKKKEAPTPIAKKKGGIEIVNTFENQTPPVENNPKVVSHSQIEKAKQKLQEIQKSREALNKLTQSNANNAKKEISEVKKQEQEIKRHENIKRRTGFRVIKRNDEVENESENSVTESKKPTQSAAAIFEDIKKEWQEKDKQEAKKAKKPSKPKATPTAKNNKSHKIDFSDARDFKGNDIYDDETDEILLFDLHEQDNFNKEEEEKEIRQNINDRVRVQRKNPWMNESGIKRQSKKKRAFRNDNSQKVIQSAIAIPEEVRVYEFAQKANLNLADVIKTLFNLGLMVTKNDFLDKDSIEILAEEFHLEISVQNTLEEFEVEEVLEGVKKERPPVVTIMGHVDHGKTSLLDKIRDKRVAHTEAGGITQHIGAYMVEKNGKWVSFIDTPGHEAFSQMRNRGAQVTDIAVIVIAADDGVKQQTIEALEHAKAANVPVIFAMNKMDKPNVNPDKLKAECAELGYNPVDWGGEHEFIPVSAKTGDGIDNLLETILIQADIMELKAIEEGSARAVVLEGSVEKGRGAVATVIVQSGTLSVGDSFFAETAFGKVRTMTDDQGKSIQNLKPSMVALITGLSEVPPAGSVLIGVENDSIARLQAQKRATYLRQKALSKSTKVSFDELSEMVANKELKNIPVVIKADTQGSLEAIKNSLLELNNEEVAIQVIHSGVGGITENDLSLVSSSDHAVILGFNIRPTGNVKNKAKEYNVSIKTYTVIYALIEEMRSLLLGLMSPIIEEEHTGQAEVRETFNIPKVGTIAGCVVSDGVIARGIKARLIRDGVVVHTGEILSLKRFKDDVKEVSKGYECGIMLDNYNEIKVGDVFETYKEIHKKRTL.

Disordered regions lie at residues 61–156 and 171–274; these read IQAN…KAKQ and LTQS…SHKI. The segment covering 179–196 has biased composition (basic and acidic residues); it reads AKKEISEVKKQEQEIKRH. Over residues 197–208 the composition is skewed to basic residues; it reads ENIKRRTGFRVI. The span at 237 to 252 shows a compositional bias: basic and acidic residues; that stretch reads EDIKKEWQEKDKQEAK. Positions 436-605 constitute a tr-type G domain; that stretch reads ERPPVVTIMG…LIQADIMELK (170 aa). The G1 stretch occupies residues 445–452; the sequence is GHVDHGKT. 445-452 is a GTP binding site; the sequence is GHVDHGKT. Positions 470-474 are G2; sequence GITQH. Residues 491-494 are G3; sequence DTPG. Residues 491–495 and 545–548 contribute to the GTP site; these read DTPGH and NKMD. The interval 545–548 is G4; sequence NKMD. A G5 region spans residues 581-583; that stretch reads SAK.

Belongs to the TRAFAC class translation factor GTPase superfamily. Classic translation factor GTPase family. IF-2 subfamily.

It localises to the cytoplasm. Its function is as follows. One of the essential components for the initiation of protein synthesis. Protects formylmethionyl-tRNA from spontaneous hydrolysis and promotes its binding to the 30S ribosomal subunits. Also involved in the hydrolysis of GTP during the formation of the 70S ribosomal complex. The sequence is that of Translation initiation factor IF-2 from Helicobacter pylori (strain G27).